The primary structure comprises 950 residues: MEKSLKKKIIVRGAKEHNLKNVDVDIPKDGLVVISGKSGSGKSSLAFDTIFAEGQRRYMESVSAYARQFLGVMKKPNVDYIDGLSPSIAIEQRTISNNPRSTVGTITEIYDYYRLIFAKIGKAYCPNDGRLIEEQSLDKIVNTILSYSEGSKVILFAPIVRGSKGSHKKVLEKILNQGFNRVRINSEDYLIEDALNLNLHKNKKHTIEIIVDRIKLGNNVRVRLAESIETSLAVSNGYLRVEIDNDLEKIDKLFTEHNSCPLCGFSLPLIEPRLFSFNSPFGACSECSGLGVTLEFDFESICPDTSLSFNDDAFLTFKTSSSWSVAIFKGLAKHYNFDLNTPIKDIPDKVLKQILYGSNEKIDFIYQSKEMEAKELDGGFHYSKTFEGLLPLLKRRYLATESESTKIFYENLMSKKICNSCKGKRLSVGALTVKINGKDIQDLTNLSVFDSYVFFENLQLDMVDEKISKEILKEIKSRLKFLIDVGLSYLYLNRISGSLSGGEAQRIRLATQIGSALSGVIYVLDEPSIGLHQRDNEKLISTLVNLKNLGNTVIVVEHDEQTLRTADYIIDMGPGAGILGGEIVAKGALIDILNSKNSLTGQYLSGKFKIDVPSSRRKADKGEILLLGSNKNNLKNIDLSIPLGVFTVITGVSGSGKSTLLNEVLYPALDSRLKLNEKYCDGFKDIVGYEKIDKIIQINQKPIGRTSRSNPATYVGFFTEIRELFAKLPDAKSRGFKAGRFSFNVKGGRCEKCQGDGYLNIQMHFLPDVFVPCDLCKGKKFNEETLEVRYKGKNIHDVLEMSVFEASKFFENVPKISHYLKFLIEVGLEYIKLGQSATTLSGGEAQRIKLAFELSKKSTGKTFYIIDEPTTGLHFDDIKKLLEVLQRLVSNGNTVVLIEHNLDVIKQADYIIDLGPDGGLAGGNIVVSGIPEEVAKCENSYTGMFLKNLL.

36 to 43 (GKSGSGKS) contributes to the ATP binding site. A C4-type zinc finger spans residues 260 to 287 (CPLCGFSLPLIEPRLFSFNSPFGACSEC). ABC transporter domains lie at 317–599 (FKTS…KNSL) and 619–947 (ADKG…MFLK). ATP is bound at residue 651–658 (GVSGSGKS). The C4-type zinc finger occupies 750-776 (CEKCQGDGYLNIQMHFLPDVFVPCDLC).

Belongs to the ABC transporter superfamily. UvrA family. As to quaternary structure, forms a heterotetramer with UvrB during the search for lesions.

It is found in the cytoplasm. The UvrABC repair system catalyzes the recognition and processing of DNA lesions. UvrA is an ATPase and a DNA-binding protein. A damage recognition complex composed of 2 UvrA and 2 UvrB subunits scans DNA for abnormalities. When the presence of a lesion has been verified by UvrB, the UvrA molecules dissociate. This is UvrABC system protein A from Borreliella burgdorferi (strain ATCC 35210 / DSM 4680 / CIP 102532 / B31) (Borrelia burgdorferi).